Here is a 546-residue protein sequence, read N- to C-terminus: Hexose oxidase (546 aa).

The 183-residue stretch at 40–222 (IGTNIDFVYV…TKYYFKDLPM (183 aa)) folds into the FAD-binding PCMH-type domain. A cross-link (6-(S-cysteinyl)-8alpha-(pros-histidyl)-FAD (His-Cys)) is located at residues 79–138 (HCYEDFVFDECVKAIINVTGLVESGYDDDRGYFVSSGDTNWGSFKTLFRDHGRVLPGGSC). 2 N-linked (GlcNAc...) asparagine glycosylation sites follow: Asn95 and Asn358.

The protein belongs to the oxygen-dependent FAD-linked oxidoreductase family. As to quaternary structure, homodimer. FAD serves as cofactor. Cleaved into 40 kDa and 29 kDa cleavage products, but the 2 polypeptide chains do not separate and seem to be physically linked together. Post-translationally, the FAD cofactor is bound via a bicovalent 6-S-cysteinyl, 8alpha-N1-histidyl FAD linkage.

It carries out the reaction beta-D-glucose + O2 = D-glucono-1,5-lactone + H2O2. The enzyme catalyses D-galactose + O2 = D-galactono-1,5-lactone + H2O2. The catalysed reaction is D-maltose + O2 = D-maltobiono-1,5-lactone + H2O2. It catalyses the reaction D-cellobiose + O2 = D-cellobiono-1,5-lactone + H2O2. It carries out the reaction beta-lactose + O2 = lactobiono-1,5-lactone + H2O2. Its function is as follows. Catalyzes the selective oxidation of C1 hydroxyl moieties on mono- and disaccharides with concomitant reduction of molecular oxygen to hydrogen peroxide. This results in the formation of the corresponding lactones, which typically undergo spontaneous hydrolysis. Hexose oxidase is able to oxidize a variety of substrates including D-glucose, D-galactose, maltose, cellobiose, and lactose. The sequence is that of Hexose oxidase (HOX) from Chondrus crispus (Carrageen Irish moss).